We begin with the raw amino-acid sequence, 358 residues long: Serine/threonine-protein phosphatase 2A activator 2 (358 aa).

The protein belongs to the PTPA-type PPIase family.

It localises to the cytoplasm. It catalyses the reaction [protein]-peptidylproline (omega=180) = [protein]-peptidylproline (omega=0). Its function is as follows. PPIases accelerate the folding of proteins. It catalyzes the cis-trans isomerization of proline imidic peptide bonds in oligopeptides. Acts as a regulatory subunit for PP2A-like phosphatases modulating their activity or substrate specificity, probably by inducing a conformational change in the catalytic subunit, a direct target of the PPIase. Can reactivate inactive phosphatase PP2A-phosphatase methylesterase complexes (PP2Ai) in presence of ATP and Mg(2+) by dissociating the inactive form from the complex. This chain is Serine/threonine-protein phosphatase 2A activator 2 (RRD2), found in Candida albicans (strain SC5314 / ATCC MYA-2876) (Yeast).